A 173-amino-acid chain; its full sequence is 2-C-methyl-D-erythritol 2,4-cyclodiphosphate synthase (173 aa).

Residues aspartate 17 and histidine 19 each coordinate a divalent metal cation. 4-CDP-2-C-methyl-D-erythritol 2-phosphate is bound by residues 17 to 19 (DVH) and 49 to 50 (HS). Histidine 57 lines the a divalent metal cation pocket. 4-CDP-2-C-methyl-D-erythritol 2-phosphate contacts are provided by residues 76-80 (FPNTD), 147-150 (TTTE), phenylalanine 154, and arginine 157.

The protein belongs to the IspF family. As to quaternary structure, homotrimer. Requires a divalent metal cation as cofactor.

It carries out the reaction 4-CDP-2-C-methyl-D-erythritol 2-phosphate = 2-C-methyl-D-erythritol 2,4-cyclic diphosphate + CMP. It participates in isoprenoid biosynthesis; isopentenyl diphosphate biosynthesis via DXP pathway; isopentenyl diphosphate from 1-deoxy-D-xylulose 5-phosphate: step 4/6. Its function is as follows. Involved in the biosynthesis of isopentenyl diphosphate (IPP) and dimethylallyl diphosphate (DMAPP), two major building blocks of isoprenoid compounds. Catalyzes the conversion of 4-diphosphocytidyl-2-C-methyl-D-erythritol 2-phosphate (CDP-ME2P) to 2-C-methyl-D-erythritol 2,4-cyclodiphosphate (ME-CPP) with a corresponding release of cytidine 5-monophosphate (CMP). The chain is 2-C-methyl-D-erythritol 2,4-cyclodiphosphate synthase from Ehrlichia chaffeensis (strain ATCC CRL-10679 / Arkansas).